A 643-amino-acid polypeptide reads, in one-letter code: Transmembrane 9 superfamily member 4 (643 aa).

Positions 1-23 (MAAAMIWWPRFLLLLCLTCKGST) are cleaved as a signal peptide. Residues 24 to 282 (FYVPGVAPIN…TMSDVQIHWF (259 aa)) are Extracellular-facing. A helical transmembrane segment spans residues 283–303 (SIINSVVVVFFLSGILSMIII). Over 304–347 (RTLRKDIANYNKEDDIEDTMEESGWKLVHGDVFRPPQYPMILSS) the chain is Cytoplasmic. Tyr-313 is modified (phosphotyrosine). The chain crosses the membrane as a helical span at residues 348–368 (LLGSGIQLFCMILIVIFVAML). The Extracellular portion of the chain corresponds to 369 to 377 (GMLSPSSRG). A helical membrane pass occupies residues 378 to 398 (ALMTTACFLFMFMGVFGGFSA). The Cytoplasmic portion of the chain corresponds to 399–417 (GRLYRTLKGHRWKKGAFCT). A helical transmembrane segment spans residues 418–438 (ATLYPGVVFGICFVLNCFIWG). The Extracellular segment spans residues 439-450 (KHSSGAVPFPTM). Residues 451 to 471 (VALLCMWFGISLPLVYLGYYF) form a helical membrane-spanning segment. Over 472–502 (GFRKQPYDNPVRTNQIPRQIPEQRWYMNRFV) the chain is Cytoplasmic. The chain crosses the membrane as a helical span at residues 503 to 523 (GILMAGILPFGAMFIELFFIF). The Extracellular segment spans residues 524–536 (SAIWENQFYYLFG). The chain crosses the membrane as a helical span at residues 537–557 (FLFLVFIILVVSCSQISIVMV). At 558-571 (YFQLCAEDYRWWWR) the chain is on the cytoplasmic side. Residues 572-592 (NFLVSGGSAFYVLVYAIFYFV) form a helical membrane-spanning segment. The Extracellular portion of the chain corresponds to 593–599 (NKLDIVE). Residues 600-620 (FIPSLLYFGYTTLMVLSFWLL) form a helical membrane-spanning segment. Residues 621 to 643 (TGTIGFYAAYMFVRKIYAAVKID) lie on the Cytoplasmic side of the membrane.

This sequence belongs to the nonaspanin (TM9SF) (TC 9.A.2) family.

Its subcellular location is the membrane. It is found in the golgi apparatus. The protein resides in the early endosome. Its function is as follows. Associates with proteins harboring glycine-rich transmembrane domains and ensures their efficient localization to the cell surface. In Rattus norvegicus (Rat), this protein is Transmembrane 9 superfamily member 4 (Tm9sf4).